A 106-amino-acid polypeptide reads, in one-letter code: Protein Rev (106 aa).

Residues 8 to 16 are homomultimerization; sequence VIKFLYQSN. Residues 13–36 are disordered; sequence YQSNPPPRPEGTRQARRNRRRRWR. A Nuclear localization signal and RNA-binding (RRE) motif is present at residues 24 to 40; it reads TRQARRNRRRRWRARQR. Residues 26–36 show a composition bias toward basic residues; sequence QARRNRRRRWR. Residues 63 to 74 carry the Nuclear export signal and binding to XPO1 motif; that stretch reads LQLPPLERLTLD. Phosphoserine; by host occurs at positions 82 and 89.

The protein belongs to the HIV-1 REV protein family. Homomultimer; when bound to the RRE. Multimeric assembly is essential for activity and may involve XPO1. Binds to human KPNB1, XPO1, TNPO1, RANBP5 and IPO7. Interacts with the viral Integrase. Interacts with human KHDRBS1. Interacts with human NAP1; this interaction decreases Rev multimerization and stimulates its activity. Interacts with human DEAD-box helicases DDX3 and DDX24; these interactions may serve for viral RNA export to the cytoplasm and packaging, respectively. Interacts with human PSIP1; this interaction may inhibit HIV-1 DNA integration by promoting dissociation of the Integrase-LEDGF/p75 complex. In terms of processing, asymmetrically arginine dimethylated at one site by host PRMT6. Methylation impairs the RNA-binding activity and export of viral RNA from the nucleus to the cytoplasm. Phosphorylated by protein kinase CK2. Presence of, and maybe binding to the N-terminus of the regulatory beta subunit of CK2 is necessary for CK2-mediated Rev's phosphorylation.

The protein resides in the host nucleus. Its subcellular location is the host nucleolus. It localises to the host cytoplasm. Its function is as follows. Escorts unspliced or incompletely spliced viral pre-mRNAs (late transcripts) out of the nucleus of infected cells. These pre-mRNAs carry a recognition sequence called Rev responsive element (RRE) located in the env gene, that is not present in fully spliced viral mRNAs (early transcripts). This function is essential since most viral proteins are translated from unspliced or partially spliced pre-mRNAs which cannot exit the nucleus by the pathway used by fully processed cellular mRNAs. Rev itself is translated from a fully spliced mRNA that readily exits the nucleus. Rev's nuclear localization signal (NLS) binds directly to KPNB1/Importin beta-1 without previous binding to KPNA1/Importin alpha-1. KPNB1 binds to the GDP bound form of RAN (Ran-GDP) and targets Rev to the nucleus. In the nucleus, the conversion from Ran-GDP to Ran-GTP dissociates Rev from KPNB1 and allows Rev's binding to the RRE in viral pre-mRNAs. Rev multimerization on the RRE via cooperative assembly exposes its nuclear export signal (NES) to the surface. Rev can then form a complex with XPO1/CRM1 and Ran-GTP, leading to nuclear export of the complex. Conversion from Ran-GTP to Ran-GDP mediates dissociation of the Rev/RRE/XPO1/RAN complex, so that Rev can return to the nucleus for a subsequent round of export. Beside KPNB1, also seems to interact with TNPO1/Transportin-1, RANBP5/IPO5 and IPO7/RANBP7 for nuclear import. The nucleoporin-like HRB/RIP is an essential cofactor that probably indirectly interacts with Rev to release HIV RNAs from the perinuclear region to the cytoplasm. In Homo sapiens (Human), this protein is Protein Rev.